We begin with the raw amino-acid sequence, 383 residues long: Chitinase-3-like protein 1 (383 aa).

Positions Met-1–Ala-21 are cleaved as a signal peptide. Positions Tyr-22–Val-383 constitute a GH18 domain. Residues Cys-26 and Cys-51 are joined by a disulfide bond. Asn-60 carries an N-linked (GlcNAc...) asparagine glycan. Chitin-binding positions include Glu-70–Trp-71, Gly-97–Asn-100, Tyr-141, Leu-204–Asp-207, and Arg-263. The cysteines at positions 300 and 364 are disulfide-linked. The interval Gln-324–Ala-338 is important for AKT1 activation and IL8 production. Trp-352 lines the chitin pocket. Asn-367 carries an N-linked (GlcNAc...) asparagine glycan.

This sequence belongs to the glycosyl hydrolase 18 family. Monomer. In terms of processing, glycosylated. As to expression, mammary secretions collected during the non-lactating period.

The protein localises to the secreted. The protein resides in the extracellular space. Its subcellular location is the cytoplasm. It localises to the perinuclear region. It is found in the endoplasmic reticulum. In terms of biological role, carbohydrate-binding lectin with a preference for chitin. Has no chitinase activity. May play a role in tissue remodeling and in the capacity of cells to respond to and cope with changes in their environment. Plays a role in T-helper cell type 2 (Th2) inflammatory response and IL-13-induced inflammation, regulating allergen sensitization, inflammatory cell apoptosis, dendritic cell accumulation and M2 macrophage differentiation. Facilitates invasion of pathogenic enteric bacteria into colonic mucosa and lymphoid organs. Mediates activation of AKT1 signaling pathway and subsequent IL8 production in colonic epithelial cells. Regulates antibacterial responses in lung by contributing to macrophage bacterial killing, controlling bacterial dissemination and augmenting host tolerance. Also regulates hyperoxia-induced injury, inflammation and epithelial apoptosis in lung. In Bos taurus (Bovine), this protein is Chitinase-3-like protein 1 (CHI3L1).